Here is a 109-residue protein sequence, read N- to C-terminus: Nucleoid-associated protein VP2178 (109 aa).

Disordered regions lie at residues 1–22 and 88–109; these read MFGK…ERMQ and QKEK…KMPF.

The protein belongs to the YbaB/EbfC family. In terms of assembly, homodimer.

The protein resides in the cytoplasm. It localises to the nucleoid. Functionally, binds to DNA and alters its conformation. May be involved in regulation of gene expression, nucleoid organization and DNA protection. In Vibrio parahaemolyticus serotype O3:K6 (strain RIMD 2210633), this protein is Nucleoid-associated protein VP2178.